A 327-amino-acid chain; its full sequence is Guanine nucleotide-binding protein subunit beta-like protein 1 (327 aa).

7 WD repeats span residues 16–54 (LRGT…IWSL), 58–97 (RAVT…LWDL), 103–145 (AVVD…ILEM), 153–195 (ALKP…LWDV), 200–237 (VCSR…VWSL), 242–282 (ALQV…VFHW), and 286–323 (QPLA…LWSL).

Ubiquitous. Highly expressed in heart, liver, skeletal muscle, kidney, spleen, thymus and pancreas. Detected at low levels in lung, placenta and brain.

It is found in the cytoplasm. The protein localises to the nucleus. Acts as a critical regulator of DNA damage response (DDR) signaling via specifically regulating phosphatidylinositol 3-kinase-related protein kinase (PIKK) family proteins. This Homo sapiens (Human) protein is Guanine nucleotide-binding protein subunit beta-like protein 1.